Reading from the N-terminus, the 84-residue chain is Putative antitoxin RelB4 (84 aa).

Functionally, antitoxin component of a type II toxin-antitoxin (TA) system. Its cognate toxin is RelE4 (Potential). The sequence is that of Putative antitoxin RelB4 (relB4) from Methanocaldococcus jannaschii (strain ATCC 43067 / DSM 2661 / JAL-1 / JCM 10045 / NBRC 100440) (Methanococcus jannaschii).